Consider the following 140-residue polypeptide: Putative 6-pyruvoyl tetrahydrobiopterin synthase (140 aa).

H19 is a Zn(2+) binding site. The active-site Proton acceptor is the C38. Positions 44 and 46 each coordinate Zn(2+). Catalysis depends on charge relay system residues H84 and E129.

Belongs to the PTPS family. In terms of assembly, homohexamer formed of two homotrimers in a head to head fashion. The cofactor is Zn(2+).

The catalysed reaction is 7,8-dihydroneopterin 3'-triphosphate = 6-pyruvoyl-5,6,7,8-tetrahydropterin + triphosphate + H(+). It participates in cofactor biosynthesis; tetrahydrobiopterin biosynthesis; tetrahydrobiopterin from 7,8-dihydroneopterin triphosphate: step 1/3. Involved in the biosynthesis of tetrahydrobiopterin, an essential cofactor of aromatic amino acid hydroxylases. Catalyzes the transformation of 7,8-dihydroneopterin triphosphate into 6-pyruvoyl tetrahydropterin. In Caenorhabditis elegans, this protein is Putative 6-pyruvoyl tetrahydrobiopterin synthase (ptps-1).